The primary structure comprises 445 residues: Tubulin beta chain (445 aa).

The MREI motif signature appears at 1-4 (MREI). Glutamine 11 lines the GTP pocket. Position 40 is a phosphoserine (serine 40). Lysine 58 bears the N6-acetyllysine; alternate mark. Lysine 58 is modified (N6-succinyllysine; alternate). Lysine 58 is covalently cross-linked (Glycyl lysine isopeptide (Lys-Gly) (interchain with G-Cter in ubiquitin); alternate). GTP-binding residues include glutamate 69, serine 138, glycine 142, threonine 143, and glycine 144. Residue glutamate 69 coordinates Mg(2+). Serine 172 is modified (phosphoserine; by CDK1). GTP is bound by residues asparagine 204 and asparagine 226. Phosphothreonine occurs at positions 285 and 290. Arginine 318 is subject to Omega-N-methylarginine. A Glycyl lysine isopeptide (Lys-Gly) (interchain with G-Cter in ubiquitin) cross-link involves residue lysine 324. The tract at residues 424–445 (QYQDATADEQGEFEEEGEEDEA) is disordered. Acidic residues predominate over residues 429 to 445 (TADEQGEFEEEGEEDEA). Glutamate 438 carries the post-translational modification 5-glutamyl polyglutamate.

Belongs to the tubulin family. As to quaternary structure, dimer of alpha and beta chains. A typical microtubule is a hollow water-filled tube with an outer diameter of 25 nm and an inner diameter of 15 nM. Alpha-beta heterodimers associate head-to-tail to form protofilaments running lengthwise along the microtubule wall with the beta-tubulin subunit facing the microtubule plus end conferring a structural polarity. Microtubules usually have 13 protofilaments but different protofilament numbers can be found in some organisms and specialized cells. Interacts with NCKAP5L. The cofactor is Mg(2+). In terms of processing, some glutamate residues at the C-terminus are polyglycylated, resulting in polyglycine chains on the gamma-carboxyl group. Glycylation is mainly limited to tubulin incorporated into axonemes (cilia and flagella) whereas glutamylation is prevalent in neuronal cells, centrioles, axonemes, and the mitotic spindle. Both modifications can coexist on the same protein on adjacent residues, and lowering polyglycylation levels increases polyglutamylation, and reciprocally. Cilia and flagella glycylation is required for their stability and maintenance. Flagella glycylation controls sperm motility. Post-translationally, some glutamate residues at the C-terminus are polyglutamylated, resulting in polyglutamate chains on the gamma-carboxyl group. Polyglutamylation plays a key role in microtubule severing by spastin (SPAST). SPAST preferentially recognizes and acts on microtubules decorated with short polyglutamate tails: severing activity by SPAST increases as the number of glutamates per tubulin rises from one to eight, but decreases beyond this glutamylation threshold. Phosphorylated on Ser-172 by CDK1 during the cell cycle, from metaphase to telophase, but not in interphase. This phosphorylation inhibits tubulin incorporation into microtubules.

It localises to the cytoplasm. Its subcellular location is the cytoskeleton. Functionally, tubulin is the major constituent of microtubules, a cylinder consisting of laterally associated linear protofilaments composed of alpha- and beta-tubulin heterodimers. Microtubules grow by the addition of GTP-tubulin dimers to the microtubule end, where a stabilizing cap forms. Below the cap, tubulin dimers are in GDP-bound state, owing to GTPase activity of alpha-tubulin. In Sus scrofa (Pig), this protein is Tubulin beta chain.